The following is a 128-amino-acid chain: Small ribosomal subunit protein uS11 (128 aa).

This sequence belongs to the universal ribosomal protein uS11 family. As to quaternary structure, part of the 30S ribosomal subunit. Interacts with proteins S7 and S18. Binds to IF-3.

Located on the platform of the 30S subunit, it bridges several disparate RNA helices of the 16S rRNA. Forms part of the Shine-Dalgarno cleft in the 70S ribosome. This Synechococcus sp. (strain JA-3-3Ab) (Cyanobacteria bacterium Yellowstone A-Prime) protein is Small ribosomal subunit protein uS11.